The primary structure comprises 157 residues: Endoribonuclease YbeY (157 aa).

Residues H114, H118, and H124 each coordinate Zn(2+).

It belongs to the endoribonuclease YbeY family. It depends on Zn(2+) as a cofactor.

The protein resides in the cytoplasm. Its function is as follows. Single strand-specific metallo-endoribonuclease involved in late-stage 70S ribosome quality control and in maturation of the 3' terminus of the 16S rRNA. In Caulobacter vibrioides (strain ATCC 19089 / CIP 103742 / CB 15) (Caulobacter crescentus), this protein is Endoribonuclease YbeY.